Consider the following 387-residue polypeptide: Guanylate kinase 1 (387 aa).

The region spanning Glu137 to Gly319 is the Guanylate kinase-like domain. Residue Gly144–Gly151 participates in ATP binding. Active-site residues include Arg177, Arg270, and Arg281. ATP contacts are provided by Asn304 and Asp305.

Belongs to the guanylate kinase family. As to quaternary structure, monomer.

It carries out the reaction GMP + ATP = GDP + ADP. Functionally, essential for recycling GMP and indirectly, cGMP. Required for normal development of the gametophyte and embryo, in association with GK2. This is Guanylate kinase 1 (GK-1) from Arabidopsis thaliana (Mouse-ear cress).